The primary structure comprises 156 residues: MVDVLGGRRLVTREGTVVEAEVALQNKVVALYFAAGRCSPSRDFTPLLCDFYTELVSEARRPAPFEVVFVSADGSAEEMLDFMRELHGSWLALPFHDPYRHELKKRYEITAIPKLVVIKQNGAVITNKGRKQIRERGLACFQNWVEAADVFQNFSG.

One can recognise a Thioredoxin domain in the interval 9–147; it reads RLVTREGTVV…LACFQNWVEA (139 aa).

The protein belongs to the nucleoredoxin family. As to expression, both isoforms are expressed in retina, in the photoreceptor layer, and throughout the olfactory sensory neuron layer of the nasal epithelium, in neurons. Also expressed at low levels in brain and testis.

Its function is as follows. May be involved in the maintenance of both the function and the viability of sensory neurons, including photoreceptors and olfactory neurons. In the retina, isoform 1 may be required for rod function and isoform 2 for cone viability and function. The polypeptide is Nucleoredoxin-like protein 2 (Nxnl2) (Mus musculus (Mouse)).